Here is a 271-residue protein sequence, read N- to C-terminus: Secretagogin (271 aa).

EF-hand domains are found at residues 8–43 (LDAAEFLEIWQRFDADDNGYIEGKELDEFFCHLLKK), 53–88 (KVQGVKDRFMSAYDITADGRLQIQELANMILPEDEN), 100–135 (DNSVEFMRIWRKFDEDSSGFISAVELRNFLQDLFLQ), 144–179 (KLDEYTDTMMKLFNRNKDGRLDLNDLAKILALQENF), 192–227 (ERKSDFETIFAHYDVSKTGALEGPEVDGFVKDMMEL), and 235–271 (VDLDKFRQILLNHCDVNKDGKIQKSELALCLGLKANP). 5 residues coordinate Ca(2+): Asp21, Asp23, Asn25, Tyr27, and Glu32. Positions 113, 115, 117, 124, 159, 161, 163, 168, 205, 207, 209, 216, 249, 251, 253, 255, and 260 each coordinate Ca(2+).

Its subcellular location is the cytoplasm. The protein is Secretagogin (scgn) of Xenopus laevis (African clawed frog).